The chain runs to 233 residues: V-type proton ATPase subunit E (233 aa).

Belongs to the V-ATPase E subunit family. V-ATPase is a heteromultimeric enzyme composed of a peripheral catalytic V1 complex (components A to H) attached to an integral membrane V0 proton pore complex (components: a, c, c', c'' and d).

In terms of biological role, subunit of the peripheral V1 complex of vacuolar ATPase essential for assembly or catalytic function. V-ATPase is responsible for acidifying a variety of intracellular compartments in eukaryotic cells. In Dictyostelium discoideum (Social amoeba), this protein is V-type proton ATPase subunit E (vatE).